Reading from the N-terminus, the 217-residue chain is Probable transaldolase (217 aa).

Lysine 83 acts as the Schiff-base intermediate with substrate in catalysis.

The protein belongs to the transaldolase family. Type 3B subfamily.

It localises to the cytoplasm. It carries out the reaction D-sedoheptulose 7-phosphate + D-glyceraldehyde 3-phosphate = D-erythrose 4-phosphate + beta-D-fructose 6-phosphate. It participates in carbohydrate degradation; pentose phosphate pathway; D-glyceraldehyde 3-phosphate and beta-D-fructose 6-phosphate from D-ribose 5-phosphate and D-xylulose 5-phosphate (non-oxidative stage): step 2/3. Transaldolase is important for the balance of metabolites in the pentose-phosphate pathway. This Brucella abortus (strain S19) protein is Probable transaldolase.